The chain runs to 921 residues: Respiratory burst oxidase homolog protein D (921 aa).

The interval 1–71 (MKMRRGNSSN…RSNSVAGGRG (71 aa)) is disordered. Topologically, residues 1-376 (MKMRRGNSSN…KYFILDNWQR (376 aa)) are cytoplasmic. Phosphoserine occurs at positions 8, 9, 26, and 39. Residues 21 to 31 (NSDTNSDTESI) show a composition bias toward polar residues. Basic residues predominate over residues 44-53 (RPKRASKKNA). EF-hand-like regions lie at residues 193 to 203 (SADSNGLLLSA) and 230 to 241 (NNVSGDAITKEQ). 2 consecutive EF-hand domains span residues 253–288 (SFDA…SASA) and 297–332 (QAKE…APNQ). Positions 266, 268, 270, 272, and 277 each coordinate Ca(2+). 3 positions are modified to phosphoserine: S339, S343, and S347. The chain crosses the membrane as a helical span at residues 377–397 (LWIMMLWLGICGGLFTYKFIQ). The Extracellular portion of the chain corresponds to 398-461 (YKNKAAYGVM…FDDSLNFHKV (64 aa)). A Ferric oxidoreductase domain is found at 415 to 572 (KGGAETLKFN…LFIIVYALLI (158 aa)). Residues 462 to 482 (IASGIVVGVLLHAGAHLTCDF) form a helical membrane-spanning segment. Topologically, residues 483 to 516 (PRLIAADEDTYEPMEKYFGDQPTSYWWFVKGVEG) are cytoplasmic. Residues 517-537 (WTGIVMVVLMAIAFTLATPWF) form a helical membrane-spanning segment. Over 538-559 (RRNKLNLPNFLKKLTGFNAFWY) the chain is Extracellular. The helical transmembrane segment at 560–580 (THHLFIIVYALLIVHGIKLYL) threads the bilayer. The Cytoplasmic portion of the chain corresponds to 581–588 (TKIWYQKT). A helical transmembrane segment spans residues 589 to 606 (TWMYLAVPILLYASERLL). Residues 607–734 (RAFRSSIKPV…PYGAPAQDYK (128 aa)) lie on the Extracellular side of the membrane. The FAD-binding FR-type domain maps to 611–732 (SSIKPVKMIK…DGPYGAPAQD (122 aa)). The helical transmembrane segment at 735 to 755 (KYDVVLLVGLGIGATPMISIL) threads the bilayer. Topologically, residues 756 to 921 (KDIINNMKGP…TKFDFHKENF (166 aa)) are cytoplasmic.

The protein belongs to the RBOH (TC 5.B.1.3) family. In terms of assembly, monomer and homodimer. Interacts with BIK1 and FLS2. Interacts with PBL13. Binds to SIK1 upon flagellin perception and becomes activated by phosphorylation. Phosphorylated at Ser-39, Ser-343 and Ser-347 by BIK1 upon flagellin (flg22) treatment. Activated by phosphorylation at Ser-347 mediated by SIK1 and at Ser-8, Ser-9 and Ser-339 upon flagellin (e.g. flg22) perception. In terms of tissue distribution, more abundant in roots than in leaves, stems or inflorescences. Expressed in mesophyll and guard cells.

It is found in the membrane. With respect to regulation, inhibited by diphenylene iodinium (DPI). Its function is as follows. Calcium-dependent NADPH oxidase that generates superoxide. Involved in the generation of reactive oxygen species (ROS) during incompatible interactions with pathogens, in response to pathogen-associated molecular pattern (PAMP)-triggered immunity (PTI) signaling and in UV-B and abscisic acid ROS-dependent signaling and via SIK1 mediated activation by phosphorylation. Might be required for ROS signal amplification during light stress. The polypeptide is Respiratory burst oxidase homolog protein D (Arabidopsis thaliana (Mouse-ear cress)).